Here is a 626-residue protein sequence, read N- to C-terminus: MPSELKVLHIVLVLLYTLSSSTYNSNGNWTLEGSAADNSIGDTILTNTKKHSCGQTFNNESIPIKDSSFSFHFLFGIVPEHTQSGSHGMSFVISPTAGLPGASSDQYLGLFNETTNGKSSNHVIAIELDIQKDQEFGDIDDNHVAMVMRLSIVYSHPDQQLNVTLFPAEIPVPPRKPLLSLNRDLSPYFLEEMYYGYTASTGSIGAFHYMLSSYATPKVENPTWEFIVVPTLPPYPKKSSDRTKKILAVCLTLAVFAVFVASGICFVFYTRHKKVKEVLEEWEIQYGPHRFAYKELLNATKDFKEKQLLGKGGFGQVFKGTLPGSNAEIAVKRTSHDSRQGMSEFLAEISTIGRLRHPNLVRLLGYCRHKENLYLVYDFTPNGSLDKYLDRNENQERLTWEQRFKIIKDVASALLHLHQEWVQIIIHRDIKPANVLIDHEMNARIGDFGLAKLYDQGLDPQTSRVAGTFGYIAPELLRTGRATTSTDVYAFGLVMLEVVCGRRMIERRAPENEEVLVDWILELWESGKLFDAAEESIRQEQNRGEIELLLKLGLLCAHHTELIRPNMSAVMQILNGVSQLPDNLLDVVRAENLRGMPETSIEVLLGLNLYSVGTMTLTNSFLSHGR.

Residues 1-21 (MPSELKVLHIVLVLLYTLSSS) form the signal peptide. The interval 22–212 (TYNSNGNWTL…SIGAFHYMLS (191 aa)) is legume-lectin like. Topologically, residues 22–245 (TYNSNGNWTL…PKKSSDRTKK (224 aa)) are extracellular. Residues asparagine 28, asparagine 59, asparagine 112, and asparagine 162 are each glycosylated (N-linked (GlcNAc...) asparagine). A helical membrane pass occupies residues 246–266 (ILAVCLTLAVFAVFVASGICF). At 267-626 (VFYTRHKKVK…LTNSFLSHGR (360 aa)) the chain is on the cytoplasmic side. The 260-residue stretch at 303 to 562 (FKEKQLLGKG…GLLCAHHTEL (260 aa)) folds into the Protein kinase domain. Residues 309–317 (LGKGGFGQV) and lysine 332 contribute to the ATP site. Aspartate 429 serves as the catalytic Proton acceptor.

It in the C-terminal section; belongs to the protein kinase superfamily. Ser/Thr protein kinase family. This sequence in the N-terminal section; belongs to the leguminous lectin family.

Its subcellular location is the cell membrane. It catalyses the reaction L-seryl-[protein] + ATP = O-phospho-L-seryl-[protein] + ADP + H(+). It carries out the reaction L-threonyl-[protein] + ATP = O-phospho-L-threonyl-[protein] + ADP + H(+). In Arabidopsis thaliana (Mouse-ear cress), this protein is Putative L-type lectin-domain containing receptor kinase V.8 (LECRK58).